The chain runs to 597 residues: MAEIIQERIEDRIPELEQLERIGLFSHAEIKAIIKKASDLEYKIHRRTLLKEDFINYVQYEINLLELIQRRRARIKYSFKKDEIEYSMVHRVQGVFGRASAKWKDDVQLWLSYIVFCKKWGTKTHLSKIFSAMLAIHSNKPALWIMAAKWEMEDRLSSESARQLFLRALRFHPECPKLYQEYFRMELMHAEKLRKEKQEFEKAAMDMGDFDHPEEILKGELARIIYKNSISKIKGAEFHVSLLAIAQLFDFAKDLQKEIYDDLQALHTDDPLTWDYVARRELEIESQPGEEQPVSKQAKAVEMGRREERCCAVYEEAVKALPTEAMWKCYITFCLERFSKKTSSVPLRGQRLERTMLAFRKAHELKLLSEVQYKQWIDLLLRQDLFKEALQVAEAGTELFKDSVTMWQTKLQVLIDSKSPDVEMRFEEAFAHLKPQVCLPLWISWAEWSESAKSQEDTEAIFKKAIIAVTGASSVTLKEKYLDWAYRSGGYKKARAVFKSLQESRPFSVEFFRKMMQFEKEQEPCKMVNLREYYERALREFGTSDSDLWMDYIKEELNHPFGKPENCGQIYWRAMKMLQGQSAELFVAKHAMHQAGH.

5 HAT repeats span residues 121-153 (GTKTHLSKIFSAMLAIHSNKPALWIMAAKWEME), 156-188 (LSSESARQLFLRALRFHPECPKLYQEYFRMELM), 304-335 (GRREERCCAVYEEAVKALPTEAMWKCYITFCL), 488-520 (SGGYKKARAVFKSLQESRPFSVEFFRKMMQFEK), and 524-557 (PCKMVNLREYYERALREFGTSDSDLWMDYIKEEL).

This sequence belongs to the UTP6 family. Part of the small subunit (SSU) processome, composed of more than 70 proteins and the RNA chaperone small nucleolar RNA (snoRNA) U3.

It is found in the nucleus. It localises to the nucleolus. In terms of biological role, part of the small subunit (SSU) processome, first precursor of the small eukaryotic ribosomal subunit. During the assembly of the SSU processome in the nucleolus, many ribosome biogenesis factors, an RNA chaperone and ribosomal proteins associate with the nascent pre-rRNA and work in concert to generate RNA folding, modifications, rearrangements and cleavage as well as targeted degradation of pre-ribosomal RNA by the RNA exosome. Involved in nucleolar processing of pre-18S ribosomal RNA. The protein is U3 small nucleolar RNA-associated protein 6 homolog (Utp6) of Mus musculus (Mouse).